The following is a 413-amino-acid chain: Peptidase T (413 aa).

Zn(2+) is bound at residue His84. Residue Asp86 is part of the active site. Asp146 lines the Zn(2+) pocket. Catalysis depends on Glu180, which acts as the Proton acceptor. The Zn(2+) site is built by Glu181, Asp203, and His385.

The protein belongs to the peptidase M20B family. It depends on Zn(2+) as a cofactor.

The protein localises to the cytoplasm. It catalyses the reaction Release of the N-terminal residue from a tripeptide.. Cleaves the N-terminal amino acid of tripeptides. The polypeptide is Peptidase T (Limosilactobacillus fermentum (strain NBRC 3956 / LMG 18251) (Lactobacillus fermentum)).